A 398-amino-acid chain; its full sequence is Secreted aspartic protease 2 (398 aa).

Positions 1 to 18 (MFLKNIFIALAIALLVDA) are cleaved as a signal peptide. Residues 19-56 (TPTTTKRSAGFVALDFSVVKTPKAFPVTNGQEGKTSKR) constitute a propeptide, activation peptide. Residues 70-384 (YAADITVGSN…DLDDNEISLA (315 aa)) enclose the Peptidase A1 domain. The active site involves D88. Position 88–90 (88–90 (DTG)) interacts with pepstatin A. C103 and C115 form a disulfide bridge. Residue 141–142 (GD) participates in pepstatin A binding. Residues D247 and D270 each contribute to the Zn(2+) site. The active site involves D274. 274–278 (DSGTT) is a binding site for pepstatin A. A disulfide bridge connects residues C312 and C350. Residues N313 and N321 are each glycosylated (N-linked (GlcNAc...) asparagine).

The protein belongs to the peptidase A1 family. In terms of assembly, monomer.

The protein localises to the secreted. The enzyme catalyses Preferential cleavage at the carboxyl of hydrophobic amino acids, but fails to cleave 15-Leu-|-Tyr-16, 16-Tyr-|-Leu-17 and 24-Phe-|-Phe-25 of insulin B chain. Activates trypsinogen, and degrades keratin.. Its function is as follows. Secreted aspartic peptidases (SAPs) are a group of ten acidic hydrolases considered as key virulence factors. These enzymes supply the fungus with nutrient amino acids as well as are able to degrade the selected host's proteins involved in the immune defense. Induces host inflammatory cytokine production in a proteolytic activity-independent way. Plays a role in tissue damage during superficial infection. Moreover, acts toward human hemoglobin though limited proteolysis to generate a variety of antimicrobial hemocidins, enabling to compete with the other microorganisms of the same physiological niche using the microbicidal peptides generated from the host protein. Functionally, plays a key role in defense against host by cleaving histatin-5 (Hst 5), a peptide from human saliva that carries out fungicidal activity. The cleavage rate decreases in an order of SAP2 &gt; SAP9 &gt; SAP3 &gt; SAP7 &gt; SAP4 &gt; SAP1 &gt; SAP8. The first cleavage occurs between residues 'Lys-17' and 'His-18' of Hst 5, giving DSHAKRHHGYKRKFHEK and HHSHRGY peptides. Simultaneously, the DSHAKRHHGYKRK peptide is also formed. Further fragmentation by SAP2 results in FHEK and DSHAKRHHGY products. In Candida albicans (strain SC5314 / ATCC MYA-2876) (Yeast), this protein is Secreted aspartic protease 2.